The primary structure comprises 314 residues: Ornithine carbamoyltransferase (314 aa).

Carbamoyl phosphate-binding positions include 58–61, glutamine 85, arginine 109, and 136–139; these read STRT and HPLQ. Residues asparagine 168, aspartate 232, and 236-237 contribute to the L-ornithine site; that span reads SM. Carbamoyl phosphate contacts are provided by residues 272–273 and arginine 300; that span reads CL.

It belongs to the aspartate/ornithine carbamoyltransferase superfamily. OTCase family.

The protein localises to the cytoplasm. It carries out the reaction carbamoyl phosphate + L-ornithine = L-citrulline + phosphate + H(+). The protein operates within amino-acid biosynthesis; L-arginine biosynthesis; L-arginine from L-ornithine and carbamoyl phosphate: step 1/3. Functionally, reversibly catalyzes the transfer of the carbamoyl group from carbamoyl phosphate (CP) to the N(epsilon) atom of ornithine (ORN) to produce L-citrulline. This is Ornithine carbamoyltransferase from Hyperthermus butylicus (strain DSM 5456 / JCM 9403 / PLM1-5).